Reading from the N-terminus, the 349-residue chain is tRNA pseudouridine synthase D (349 aa).

Residue phenylalanine 26 participates in substrate binding. The Nucleophile role is filled by aspartate 79. Substrate is bound at residue asparagine 128. The TRUD domain maps to 154–303 (GVPNYFGSQR…VDAARRAMLV (150 aa)). Phenylalanine 329 contacts substrate.

This sequence belongs to the pseudouridine synthase TruD family.

It catalyses the reaction uridine(13) in tRNA = pseudouridine(13) in tRNA. Its function is as follows. Responsible for synthesis of pseudouridine from uracil-13 in transfer RNAs. The chain is tRNA pseudouridine synthase D from Erwinia tasmaniensis (strain DSM 17950 / CFBP 7177 / CIP 109463 / NCPPB 4357 / Et1/99).